The chain runs to 753 residues: 5-methyltetrahydropteroyltriglutamate--homocysteine methyltransferase (753 aa).

Residues 17-20 (RELK) and K117 each bind 5-methyltetrahydropteroyltri-L-glutamate. L-homocysteine-binding positions include 431 to 433 (IGS) and E484. L-methionine-binding positions include 431-433 (IGS) and E484. 5-methyltetrahydropteroyltri-L-glutamate is bound by residues 515 to 516 (RC) and W561. D599 lines the L-homocysteine pocket. Residue D599 coordinates L-methionine. 5-methyltetrahydropteroyltri-L-glutamate is bound at residue E605. Zn(2+) contacts are provided by H641, C643, and E665. H694 functions as the Proton donor in the catalytic mechanism. Zn(2+) is bound at residue C726.

This sequence belongs to the vitamin-B12 independent methionine synthase family. Zn(2+) is required as a cofactor.

It catalyses the reaction 5-methyltetrahydropteroyltri-L-glutamate + L-homocysteine = tetrahydropteroyltri-L-glutamate + L-methionine. It participates in amino-acid biosynthesis; L-methionine biosynthesis via de novo pathway; L-methionine from L-homocysteine (MetE route): step 1/1. Functionally, catalyzes the transfer of a methyl group from 5-methyltetrahydrofolate to homocysteine resulting in methionine formation. The polypeptide is 5-methyltetrahydropteroyltriglutamate--homocysteine methyltransferase (Escherichia coli (strain UTI89 / UPEC)).